Consider the following 195-residue polypeptide: uncharacterized protein (195 aa).

Disordered regions lie at residues 1–51 (MTHN…GPSY) and 160–195 (SYSQQQEPQHYYKKHKHHSHHRPKHVKSSRSCKSCN). Over residues 13–28 (SYQNQAPQPQYYTRQP) the composition is skewed to polar residues. Residues 170-189 (YYKKHKHHSHHRPKHVKSSR) are compositionally biased toward basic residues.

This is an uncharacterized protein from Acanthamoeba polyphaga mimivirus (APMV).